The primary structure comprises 1047 residues: Rab11 family-interacting protein 3 (1047 aa).

3 disordered regions span residues 1-107 (MELC…WPQE), 311-335 (SHSC…DVSH), and 475-496 (PGPP…TAQE). Basic and acidic residues predominate over residues 64–73 (EPHAPSRWAK). EF-hand domains lie at 496–531 (EEGA…YGAE) and 528–563 (YGAE…IRNG). 7 residues coordinate Ca(2+): Asp-509, Asp-511, Asp-513, Asp-520, Asp-541, Ser-543, and Asp-552. Phosphoserine occurs at positions 641, 765, and 829. Residues 750–985 (EEDIADKVIF…NGQIITLSIQ (236 aa)) adopt a coiled-coil conformation. The ARF-binding domain (ABD) stretch occupies residues 775 to 879 (GEQHGRLRQE…MLDEIEELTQ (105 aa)). The disordered stretch occupies residues 882-906 (SEEQENKRKMGDRLSHERHQFQRDK). A phosphoserine mark is found at Ser-938 and Ser-939. One can recognise an FIP-RBD domain in the interval 985–1047 (QGAKSLFSTS…ETNPSILEVK (63 aa)).

In terms of assembly, homodimer. Interacts with RAB11A; the interaction is direct and is required for the recruitment to endosomes. Interacts with RAB11B. Forms a ternary complex with RAB11A and dynein intermediate chain DYNC1LI1; RAB11FIP3 links RAB11A to dynein and the interaction regulates endocytic trafficking. Interacts with dynein intermediate chain and dynactin (DCTN1); the interaction activates dynein processivity. Interacts with ARF6 and EXOC7; the interaction serves for recruitment and tethering of recycling endosomes-derived vesicles to the cleavage furrow/midbody. Interacts with RACGAP1/MgcRacGAP; the interaction occurs at late telophase and is required for recruitment and tethering of recycling endosomes-derived vesicles to the cleavage furrow/midbody. Forms a complex with RAB11A and Rabin8/RAB3IP, probably a heterohexamer with two of each protein subunit, where RAB3IP and RAB11FIP3 simultaneously bind to RAB11A; the complex promotes preciliary trafficking. Forms a complex containing RAB11A, ASAP1, RAB3IP, RAP11FIP3 and ARF4; the complex promotes preciliary trafficking; the complex binds to RHO in photoreceptor cells and promotes RHO ciliary transport. Interacts with RAB11FIP4. Interacts with RAB25.

It localises to the recycling endosome membrane. The protein localises to the cytoplasm. The protein resides in the cytoskeleton. Its subcellular location is the microtubule organizing center. It is found in the centrosome. It localises to the cleavage furrow. The protein localises to the midbody. The protein resides in the golgi apparatus membrane. Its subcellular location is the golgi apparatus. It is found in the trans-Golgi network membrane. Its function is as follows. Downstream effector molecule for Rab11 GTPase which is involved in endocytic trafficking, cytokinesis and intracellular ciliogenesis by participating in membrane delivery. Recruited by Rab11 to endosomes where it links Rab11 to dynein motor complex. The functional Rab11-RAB11FIP3-dynein complex regulates the movement of peripheral sorting endosomes (SE) along microtubule tracks toward the microtubule organizing center/centrosome, generating the endocytic recycling compartment (ERC) during interphase of cell cycle. Facilitates the interaction between dynein and dynactin and activates dynein processivity. Binding with ASAP1 is needed to regulate the pericentrosomal localization of recycling endosomes. The Rab11-RAB11FIP3 complex is also implicated in the transport during telophase of vesicles derived from recycling endosomes to the cleavage furrow via centrosome-anchored microtubules, where the vesicles function to deliver membrane during late cytokinesis and abscission. The recruitment of Rab11-RAB11FIP3-containing endosomes to the cleavage furrow and tethering to the midbody is co-mediated by RAB11FIP3 interaction with ARF6-exocyst and RACGAP1-MKLP1 tethering complexes. Also involved in the Rab11-Rabin8-Rab8 ciliogenesis cascade by facilitating the orderly assembly of a ciliary targeting complex containing Rab11, ASAP1, Rabin8/RAB3IP, RAB11FIP3 and ARF4, which directs preciliary vesicle trafficking to mother centriole and ciliogenesis initiation. Also promotes the activity of Rab11 and ASAP1 in the ARF4-dependent Golgi-to-cilia transport of the sensory receptor rhodopsin. Competes with WDR44 for binding to Rab11, which controls intracellular ciliogenesis pathway. May play a role in breast cancer cell motility by regulating actin cytoskeleton. The chain is Rab11 family-interacting protein 3 from Mus musculus (Mouse).